A 679-amino-acid chain; its full sequence is MSEPRQILVTSALPYANGSIHLGHMLEYIQTDMWVRFQKLRGNQCVYVCADDAHGSAIMLRAEKEGITPEQLIANVQAEHSSDFADFLVDFDNFHSTHSEENRELSGLIYTRLRDAGHIATRSVTQYFDPEKGMFLADRFIKGTCPKCAAEDQYGDNCEKCGATYAPTELKNPKSAISGATPVLRDSQHFFFKLPDFQAMLQQWTRSGTLQDAVANKLAEWLDSGLQEWDISRDAPYFGFEIPGEPGKYFYVWLDAPIGYMASFKNLCARRPELDFDAFWSEGSKAELYHFIGKDIVNFHALFWPAMLEGSGFRKPTAVNVHGYLTVNGAKMSKSRGTFIKARTYLDHLQPEYLRYYYAAKLGRGVDDLDLNLEDFVQKVNSDLVGKVVNIASRCAGFIHKGNDGVMVAGDAAPDLTEAFLAAAPSIAEAYESRDFGRAMREIMALADRANAWIADKAPWSLAKQEGKQEEVQAICAQGINLFRQLVIFLKPVLPLLAADAEAFLNVAPLTWNDHLSRLENHKLNPFKALMSRIEPAKVEAMIAASKEDLLAAEAKAPAGNGELTKDPLSAEIEFDTFAAVDLRVALIVKAEAVPGADKLLQLTLDIGDERRNVFSGIKSAYPDPSKLEGRLTMMVANLKPRKMRFGVSEGMVMAAGPGGEEIYLLSPDSGAKPGQRIK.

A 'HIGH' region motif is present at residues 14–24 (PYANGSIHLGH). Zn(2+)-binding residues include Cys145, Cys148, Cys158, and Cys161. Positions 331–335 (KMSKS) match the 'KMSKS' region motif. Lys334 contacts ATP. Positions 577 to 679 (TFAAVDLRVA…SGAKPGQRIK (103 aa)) constitute a tRNA-binding domain.

It belongs to the class-I aminoacyl-tRNA synthetase family. MetG type 1 subfamily. In terms of assembly, homodimer. Zn(2+) serves as cofactor.

Its subcellular location is the cytoplasm. The catalysed reaction is tRNA(Met) + L-methionine + ATP = L-methionyl-tRNA(Met) + AMP + diphosphate. Its function is as follows. Is required not only for elongation of protein synthesis but also for the initiation of all mRNA translation through initiator tRNA(fMet) aminoacylation. The protein is Methionine--tRNA ligase of Pseudomonas entomophila (strain L48).